Reading from the N-terminus, the 688-residue chain is Lipase (688 aa).

Residues 1–35 (MKTRQNKYSIRKFSVGASSILIAALLFMGGGSAQA) form the signal peptide. The segment at 31–309 (GSAQAAEQQQ…KSAKQKQYKN (279 aa)) is disordered. A propeptide spans 36-302 (AEQQQDKGTV…KNEDQTNKSA (267 aa)) (removed in mature form). The segment covering 45–54 (VENSTTQSIG) has biased composition (polar residues). A compositionally biased stretch (low complexity) spans 68-79 (NKNVNEKSNVNS). Composition is skewed to basic and acidic residues over residues 84–95 (ESLHNETPKNED) and 103–143 (SQND…KHAS). Residues 144 to 172 (ENNQTLHSKAAQSNEDVKTKPSQLDNTAA) show a composition bias toward polar residues. A compositionally biased stretch (basic and acidic residues) spans 173 to 183 (KQEDSQKENLS). Residues 184–211 (KQDTQSSKTTDLLRATAQNQSKDSQSTE) are compositionally biased toward polar residues. The segment covering 240–267 (SKEEPLKVDKQANPTTDKDKSSKNDKGS) has biased composition (basic and acidic residues). Positions 274 to 289 (LESNAVATTNKQSKQQ) are enriched in polar residues. S418 functions as the Nucleophile in the catalytic mechanism. The active-site Charge relay system is the D609. A Ca(2+)-binding site is contributed by D647. H648 functions as the Charge relay system in the catalytic mechanism. Ca(2+)-binding residues include D650, D655, and D658.

This sequence belongs to the AB hydrolase superfamily. Lipase family.

It is found in the secreted. It carries out the reaction a triacylglycerol + H2O = a diacylglycerol + a fatty acid + H(+). The polypeptide is Lipase (lip) (Staphylococcus epidermidis (strain ATCC 12228 / FDA PCI 1200)).